The chain runs to 235 residues: uncharacterized protein (235 aa).

Residues 1-98 (MDTKLSVTGA…NKKNTLHYSK (98 aa)) form a disordered region. Glycyl lysine isopeptide (Lys-Gly) (interchain with G-Cter in ubiquitin) cross-links involve residues K16 and K35. Residues 38 to 50 (NGNKKRNKNRNRN) are compositionally biased toward basic residues. Residues 51 to 60 (KKTETKEQNE) show a composition bias toward basic and acidic residues.

This is an uncharacterized protein from Saccharomyces cerevisiae (strain ATCC 204508 / S288c) (Baker's yeast).